A 519-amino-acid polypeptide reads, in one-letter code: Membrane-bound lytic murein transglycosylase F (519 aa).

Positions 1-32 (MKKLKLNYLLIGVVTLLLAVALWPAIPWSGKA) are cleaved as a signal peptide. The non-LT domain stretch occupies residues 33-269 (DNRIAAIQAR…RLEEKYLGHG (237 aa)). The segment at 270–519 (NDFDYVDTRS…PNTLSPVSPR (250 aa)) is LT domain. Glu314 is an active-site residue. The interval 495–519 (PFSQAGAGGKTHSALPNTLSPVSPR) is disordered. Over residues 508 to 519 (ALPNTLSPVSPR) the composition is skewed to polar residues.

In the N-terminal section; belongs to the bacterial solute-binding protein 3 family. It in the C-terminal section; belongs to the transglycosylase Slt family.

Its subcellular location is the cell outer membrane. The enzyme catalyses Exolytic cleavage of the (1-&gt;4)-beta-glycosidic linkage between N-acetylmuramic acid (MurNAc) and N-acetylglucosamine (GlcNAc) residues in peptidoglycan, from either the reducing or the non-reducing ends of the peptidoglycan chains, with concomitant formation of a 1,6-anhydrobond in the MurNAc residue.. Its function is as follows. Murein-degrading enzyme that degrades murein glycan strands and insoluble, high-molecular weight murein sacculi, with the concomitant formation of a 1,6-anhydromuramoyl product. Lytic transglycosylases (LTs) play an integral role in the metabolism of the peptidoglycan (PG) sacculus. Their lytic action creates space within the PG sacculus to allow for its expansion as well as for the insertion of various structures such as secretion systems and flagella. The chain is Membrane-bound lytic murein transglycosylase F from Cronobacter sakazakii (strain ATCC BAA-894) (Enterobacter sakazakii).